We begin with the raw amino-acid sequence, 289 residues long: NAD(P)H-hydrate epimerase (289 aa).

Residues 71-277 (AQTIDNELMS…SIVEKYNLKV (207 aa)) form the YjeF N-terminal domain. 122–126 (NNGGD) provides a ligand contact to (6S)-NADPHX. Asparagine 123 and aspartate 185 together coordinate K(+). (6S)-NADPHX contacts are provided by residues 189-195 (GFSFTGE) and aspartate 218. Serine 221 provides a ligand contact to K(+).

The protein belongs to the NnrE/AIBP family. K(+) serves as cofactor.

It carries out the reaction (6R)-NADHX = (6S)-NADHX. It catalyses the reaction (6R)-NADPHX = (6S)-NADPHX. In terms of biological role, catalyzes the epimerization of the S- and R-forms of NAD(P)HX, a damaged form of NAD(P)H that is a result of enzymatic or heat-dependent hydration. This is a prerequisite for the S-specific NAD(P)H-hydrate dehydratase to allow the repair of both epimers of NAD(P)HX. The chain is NAD(P)H-hydrate epimerase from Plasmodium vivax (strain Salvador I).